Consider the following 299-residue polypeptide: Protoheme IX farnesyltransferase (299 aa).

Helical transmembrane passes span 26 to 46 (VNALIVFCAVIGMFLAVPDGL), 53 to 73 (FAATVGIACVAGAAAAMNCLI), 94 to 114 (LHSVEVLVFAGVLGGFGLSVL), 121 to 141 (LTMWLTLATFVGYAVIYTLLL), 149 to 169 (IVIGGASGAMPPVLGWAAVSG), 175 to 195 (ALLLFLIIFAWTPPHFWSLAL), 217 to 239 (YTRLSVLLYTCALFGVTLLPFAI), 243 to 265 (GWIYLVAAVTLGLRFVHYAWRLL), and 277 to 297 (FRFSIVYLSLLFAALLADHYL).

The protein belongs to the UbiA prenyltransferase family. Protoheme IX farnesyltransferase subfamily.

The protein resides in the cell inner membrane. It carries out the reaction heme b + (2E,6E)-farnesyl diphosphate + H2O = Fe(II)-heme o + diphosphate. It participates in porphyrin-containing compound metabolism; heme O biosynthesis; heme O from protoheme: step 1/1. Converts heme B (protoheme IX) to heme O by substitution of the vinyl group on carbon 2 of heme B porphyrin ring with a hydroxyethyl farnesyl side group. This Azoarcus sp. (strain BH72) protein is Protoheme IX farnesyltransferase.